The primary structure comprises 184 residues: ATP synthase subunit b (184 aa).

A helical transmembrane segment spans residues 16-36 (LIPPIPELVIGLIAFVIVFGF).

The protein belongs to the ATPase B chain family. In terms of assembly, F-type ATPases have 2 components, F(1) - the catalytic core - and F(0) - the membrane proton channel. F(1) has five subunits: alpha(3), beta(3), gamma(1), delta(1), epsilon(1). F(0) has three main subunits: a(1), b(2) and c(10-14). The alpha and beta chains form an alternating ring which encloses part of the gamma chain. F(1) is attached to F(0) by a central stalk formed by the gamma and epsilon chains, while a peripheral stalk is formed by the delta and b chains.

Its subcellular location is the cell membrane. In terms of biological role, f(1)F(0) ATP synthase produces ATP from ADP in the presence of a proton or sodium gradient. F-type ATPases consist of two structural domains, F(1) containing the extramembraneous catalytic core and F(0) containing the membrane proton channel, linked together by a central stalk and a peripheral stalk. During catalysis, ATP synthesis in the catalytic domain of F(1) is coupled via a rotary mechanism of the central stalk subunits to proton translocation. Functionally, component of the F(0) channel, it forms part of the peripheral stalk, linking F(1) to F(0). The chain is ATP synthase subunit b from Streptomyces coelicolor (strain ATCC BAA-471 / A3(2) / M145).